We begin with the raw amino-acid sequence, 1370 residues long: DNA-directed RNA polymerase subunit beta (1370 aa).

The protein belongs to the RNA polymerase beta chain family. As to quaternary structure, the RNAP catalytic core consists of 2 alpha, 1 beta, 1 beta' and 1 omega subunit. When a sigma factor is associated with the core the holoenzyme is formed, which can initiate transcription.

It carries out the reaction RNA(n) + a ribonucleoside 5'-triphosphate = RNA(n+1) + diphosphate. Functionally, DNA-dependent RNA polymerase catalyzes the transcription of DNA into RNA using the four ribonucleoside triphosphates as substrates. This is DNA-directed RNA polymerase subunit beta from Albidiferax ferrireducens (strain ATCC BAA-621 / DSM 15236 / T118) (Rhodoferax ferrireducens).